The sequence spans 298 residues: NADH-cytochrome b5 reductase 2 (298 aa).

Residues 13-33 (FLPFAIGAVAVTAGALYLNGW) form a helical membrane-spanning segment. The 105-residue stretch at 48–152 (RKWIDLELEK…QGPIPKWQWK (105 aa)) folds into the FAD-binding FR-type domain. 155–190 (SFDTITLLGGGTGITPLYQLVHHITQNKEDKTKINL) is a binding site for FAD.

This sequence belongs to the flavoprotein pyridine nucleotide cytochrome reductase family. Requires FAD as cofactor.

Its subcellular location is the mitochondrion outer membrane. The enzyme catalyses 2 Fe(III)-[cytochrome b5] + NADH = 2 Fe(II)-[cytochrome b5] + NAD(+) + H(+). May mediate the reduction of outer membrane cytochrome b5. The chain is NADH-cytochrome b5 reductase 2 (MCR1) from Candida glabrata (strain ATCC 2001 / BCRC 20586 / JCM 3761 / NBRC 0622 / NRRL Y-65 / CBS 138) (Yeast).